The primary structure comprises 388 residues: Mannosyl-3-phosphoglycerate synthase (388 aa).

Belongs to the glycosyltransferase 2 family.

The protein resides in the cytoplasm. The enzyme catalyses (2R)-3-phosphoglycerate + GDP-alpha-D-mannose = 2-O-(alpha-D-mannosyl)-3-phosphoglycerate + GDP + H(+). It functions in the pathway carbohydrate biosynthesis; 2-(alpha-D-mannosyl)-D-glycerate biosynthesis; 2-(alpha-D-mannosyl)-D-glycerate from GDP-alpha-D-mannose (MPG route): step 1/2. Functionally, transfers a mannosyl group from GDP-mannose to phosphoglycerate to form mannosyl-3-phosphoglycerate (MPG). The sequence is that of Mannosyl-3-phosphoglycerate synthase (mngA) from Aeropyrum pernix (strain ATCC 700893 / DSM 11879 / JCM 9820 / NBRC 100138 / K1).